We begin with the raw amino-acid sequence, 345 residues long: Olfactory receptor 11G2 (345 aa).

Over 1–62 (MHFLSQNDLN…LGFPCPREGQ (62 aa)) the chain is Extracellular. Asparagine 43 is a glycosylation site (N-linked (GlcNAc...) asparagine). Residues 63–83 (ILLFVLFTVVYLLTLMGNGSI) form a helical membrane-spanning segment. Residues 84–92 (ICAVHWDQR) are Cytoplasmic-facing. A helical transmembrane segment spans residues 93–113 (LHAPMYILLANFSFLEICYVT). The Extracellular portion of the chain corresponds to 114-135 (STVPSMLANFLSDTKIISFSGC). Cysteine 135 and cysteine 217 are joined by a disulfide. Residues 136–156 (FLQFYFFFSLGSTECFFLAVM) form a helical membrane-spanning segment. The Cytoplasmic segment spans residues 157–181 (AFDRYLAICRPLRYPTIMTRRLCTN). The helical transmembrane segment at 182-202 (LVVNCWVLGFIWFLIPIVNIS) threads the bilayer. Over 203 to 241 (QMSFCGSRIIDHFLCDPAPLLTLTCKKGPVIELVFSVLS) the chain is Extracellular. A helical membrane pass occupies residues 242–264 (PLPVFMLFLFIVGSYALVVRAVL). At 265 to 275 (RVPSAAGRRKA) the chain is on the cytoplasmic side. Residues 276–296 (FSTCGSHLAVVSLFYGSVLVM) traverse the membrane as a helical segment. The Extracellular portion of the chain corresponds to 297–309 (YGSPPSKNEAGKQ). Residues 310–330 (KTVTLFYSVVTPLLNPVIYSL) form a helical membrane-spanning segment. At 331-345 (RNKDMRKALKKFWGT) the chain is on the cytoplasmic side.

Belongs to the G-protein coupled receptor 1 family.

The protein resides in the cell membrane. In terms of biological role, odorant receptor. The protein is Olfactory receptor 11G2 (OR11G2) of Homo sapiens (Human).